The chain runs to 1374 residues: DNA-directed RNA polymerase subunit beta (1374 aa).

It belongs to the RNA polymerase beta chain family. As to quaternary structure, the RNAP catalytic core consists of 2 alpha, 1 beta, 1 beta' and 1 omega subunit. When a sigma factor is associated with the core the holoenzyme is formed, which can initiate transcription.

It carries out the reaction RNA(n) + a ribonucleoside 5'-triphosphate = RNA(n+1) + diphosphate. Its function is as follows. DNA-dependent RNA polymerase catalyzes the transcription of DNA into RNA using the four ribonucleoside triphosphates as substrates. The polypeptide is DNA-directed RNA polymerase subunit beta (Rickettsia typhi (strain ATCC VR-144 / Wilmington)).